The following is a 206-amino-acid chain: Large ribosomal subunit protein uL4 (206 aa).

Residues 55-80 form a disordered region; sequence AFVSGGGAKPWRQKGTGRARSGSNRS.

Belongs to the universal ribosomal protein uL4 family. Part of the 50S ribosomal subunit.

Functionally, one of the primary rRNA binding proteins, this protein initially binds near the 5'-end of the 23S rRNA. It is important during the early stages of 50S assembly. It makes multiple contacts with different domains of the 23S rRNA in the assembled 50S subunit and ribosome. Its function is as follows. Forms part of the polypeptide exit tunnel. This Nitratidesulfovibrio vulgaris (strain DSM 19637 / Miyazaki F) (Desulfovibrio vulgaris) protein is Large ribosomal subunit protein uL4.